Here is a 421-residue protein sequence, read N- to C-terminus: Meiotic fizzy-related protein 1 (421 aa).

The tract at residues 79–107 (DTPDRKSYSLSPISPQSQDMLRQPQKPKR) is disordered. Positions 86-98 (YSLSPISPQSQDM) are enriched in polar residues. 7 WD repeats span residues 123 to 160 (KNDF…VVQL), 164 to 203 (GATN…SVRS), 206 to 246 (GHSE…EMMK), 247 to 286 (VHEQ…PLHK), 289 to 331 (EHTA…LQNK), 333 to 374 (DTGS…NIAN), and 377 to 416 (AHTN…PKEE).

This sequence belongs to the WD repeat CDC20/Fizzy family. As to quaternary structure, interacts with mes1.

The protein localises to the nucleus. Functionally, meiosis-specific activator of the anaphase promoting complex/cyclosome (APC/C). Involved in cdc13 degradation. This Schizosaccharomyces pombe (strain 972 / ATCC 24843) (Fission yeast) protein is Meiotic fizzy-related protein 1 (mfr1).